Consider the following 550-residue polypeptide: Glucose-6-phosphate isomerase 1 (550 aa).

Glutamate 358 (proton donor) is an active-site residue. Active-site residues include histidine 389 and lysine 513.

This sequence belongs to the GPI family.

It is found in the cytoplasm. The catalysed reaction is alpha-D-glucose 6-phosphate = beta-D-fructose 6-phosphate. It participates in carbohydrate biosynthesis; gluconeogenesis. Its pathway is carbohydrate degradation; glycolysis; D-glyceraldehyde 3-phosphate and glycerone phosphate from D-glucose: step 2/4. In terms of biological role, catalyzes the reversible isomerization of glucose-6-phosphate to fructose-6-phosphate. This Streptomyces coelicolor (strain ATCC BAA-471 / A3(2) / M145) protein is Glucose-6-phosphate isomerase 1.